The following is a 110-amino-acid chain: uncharacterized protein (110 aa).

A run of 3 helical transmembrane segments spans residues 4-26, 46-68, and 72-91; these read LVGGGLMIIAGILIKLFPPKSIN, ANRYSASLMILSGLVIAGMGLLL, and LFILQLILLIAACVITFMLT.

The protein resides in the cell membrane. This is an uncharacterized protein from Bacillus subtilis (strain 168).